Here is a 739-residue protein sequence, read N- to C-terminus: Phosphoribosylformylglycinamidine synthase subunit PurL (739 aa).

Histidine 53 is an active-site residue. ATP-binding residues include tyrosine 56 and lysine 95. Glutamate 97 contacts Mg(2+). Substrate is bound by residues 98–101 and arginine 120; that span reads SHNH. Histidine 99 (proton acceptor) is an active-site residue. Aspartate 121 contributes to the Mg(2+) binding site. Glutamine 244 contacts substrate. A Mg(2+)-binding site is contributed by aspartate 274. 318–320 contacts substrate; the sequence is ESQ. Positions 501 and 538 each coordinate ATP. Asparagine 539 contacts Mg(2+). Serine 541 serves as a coordination point for substrate.

Belongs to the FGAMS family. In terms of assembly, monomer. Part of the FGAM synthase complex composed of 1 PurL, 1 PurQ and 2 PurS subunits.

The protein localises to the cytoplasm. It catalyses the reaction N(2)-formyl-N(1)-(5-phospho-beta-D-ribosyl)glycinamide + L-glutamine + ATP + H2O = 2-formamido-N(1)-(5-O-phospho-beta-D-ribosyl)acetamidine + L-glutamate + ADP + phosphate + H(+). It participates in purine metabolism; IMP biosynthesis via de novo pathway; 5-amino-1-(5-phospho-D-ribosyl)imidazole from N(2)-formyl-N(1)-(5-phospho-D-ribosyl)glycinamide: step 1/2. Part of the phosphoribosylformylglycinamidine synthase complex involved in the purines biosynthetic pathway. Catalyzes the ATP-dependent conversion of formylglycinamide ribonucleotide (FGAR) and glutamine to yield formylglycinamidine ribonucleotide (FGAM) and glutamate. The FGAM synthase complex is composed of three subunits. PurQ produces an ammonia molecule by converting glutamine to glutamate. PurL transfers the ammonia molecule to FGAR to form FGAM in an ATP-dependent manner. PurS interacts with PurQ and PurL and is thought to assist in the transfer of the ammonia molecule from PurQ to PurL. The chain is Phosphoribosylformylglycinamidine synthase subunit PurL from Listeria welshimeri serovar 6b (strain ATCC 35897 / DSM 20650 / CCUG 15529 / CIP 8149 / NCTC 11857 / SLCC 5334 / V8).